Reading from the N-terminus, the 215-residue chain is Probable transaldolase (215 aa).

The active-site Schiff-base intermediate with substrate is K83.

The protein belongs to the transaldolase family. Type 3B subfamily.

The protein localises to the cytoplasm. It catalyses the reaction D-sedoheptulose 7-phosphate + D-glyceraldehyde 3-phosphate = D-erythrose 4-phosphate + beta-D-fructose 6-phosphate. It functions in the pathway carbohydrate degradation; pentose phosphate pathway; D-glyceraldehyde 3-phosphate and beta-D-fructose 6-phosphate from D-ribose 5-phosphate and D-xylulose 5-phosphate (non-oxidative stage): step 2/3. In terms of biological role, transaldolase is important for the balance of metabolites in the pentose-phosphate pathway. In Clostridium acetobutylicum (strain ATCC 824 / DSM 792 / JCM 1419 / IAM 19013 / LMG 5710 / NBRC 13948 / NRRL B-527 / VKM B-1787 / 2291 / W), this protein is Probable transaldolase (tal).